Reading from the N-terminus, the 381-residue chain is tRNA-cytidine(32) 2-sulfurtransferase (381 aa).

The short motif at 101 to 106 (SGGKDS) is the PP-loop motif element. 3 residues coordinate [4Fe-4S] cluster: Cys176, Cys179, and Cys267.

This sequence belongs to the TtcA family. As to quaternary structure, homodimer. Mg(2+) serves as cofactor. The cofactor is [4Fe-4S] cluster.

It localises to the cytoplasm. The enzyme catalyses cytidine(32) in tRNA + S-sulfanyl-L-cysteinyl-[cysteine desulfurase] + AH2 + ATP = 2-thiocytidine(32) in tRNA + L-cysteinyl-[cysteine desulfurase] + A + AMP + diphosphate + H(+). It participates in tRNA modification. Its function is as follows. Catalyzes the ATP-dependent 2-thiolation of cytidine in position 32 of tRNA, to form 2-thiocytidine (s(2)C32). The sulfur atoms are provided by the cysteine/cysteine desulfurase (IscS) system. This chain is tRNA-cytidine(32) 2-sulfurtransferase, found in Psychrobacter arcticus (strain DSM 17307 / VKM B-2377 / 273-4).